Consider the following 1756-residue polypeptide: Multifunctional conjugation protein TraI (1756 aa).

The DNA relaxase stretch occupies residues 1-330; sequence MMSIAQVRSA…TQAIAGLSER (330 aa). Catalysis depends on Tyr-16, which acts as the O-(5'-phospho-DNA)-tyrosine intermediate; for relaxase activity. Tyr-17 functions as the Relaxase in the catalytic mechanism. The Mg(2+) site is built by His-146, His-157, and His-159. Positions 950–1500 are DNA helicase I; the sequence is GKEAVMPLME…LRDVAAGRAV (551 aa). Position 992–999 (992–999) interacts with ATP; the sequence is GYAGVGKT. The tract at residues 1534–1756 is required for DNA transfer, may interact with TraM; sequence RNGKSAGIWL…LQKEKTLGGD (223 aa). Residues 1717–1753 are a coiled coil; the sequence is QRVREAVREIARENLLQERLQQMERDMVRDLQKEKTL.

The protein to TraI of plasmid IncFII R100. In terms of assembly, monomer. Part of the relaxosome, a complex composed of plasmid-encodes TraI, TraM, TraY and host-encoded IHF bound to the F plasmid origin of transfer (oriT). Directly contacts coupling protein TraD. Seems to directly contact TraM via its C-terminus. The cofactor is Mg(2+).

The protein localises to the cytoplasm. The enzyme catalyses ATP-independent breakage of single-stranded DNA, followed by passage and rejoining.. It carries out the reaction ATP + H2O = ADP + phosphate + H(+). With respect to regulation, nicking activity (relaxase) is inhibited by bisphosphonates such as the non-competitive inhibitor imidobisphosphate (PNP), etidronic acid (ETIDRO) and clodronic acid (CLODRO). The latter 2 are competitive inhibitors, and are already used clinically to treat bone loss (marketed as Didronel and Bonefos). All 3 compounds also inhibit conjugation and kill F plasmid-containing cells. They are specific to dual tyrosine relaxases such as those found in F and related R conjugative plasmids. In terms of biological role, conjugative DNA transfer (CDT) is the unidirectional transfer of ssDNA plasmid from a donor to a recipient cell. It is the central mechanism by which antibiotic resistance and virulence factors are propagated in bacterial populations. Part of the relaxosome, which facilitates a site- and strand-specific cut in the origin of transfer by TraI, at the nic site. Relaxosome formation requires binding of IHF and TraY to the oriT region, which then facilitates binding of TraI relaxase. TraI forms a covalent 5'-phosphotyrosine intermediate linkage to the ssDNA. The transesterified T-strand moves from the donor cell to the recipient cell in a 5'to 3' direction, with the DNA helicase activity of TraI unwinding the DNA. DNA transfer occurs via the conjugative pore (transferosome) an intercellular junction mediated by a type IV secretion system, with TraD providing the means to link the relaxosome to the conjugative pore. The relaxase completes DNA transfer by reversing the covalent phosphotyrosine linkage and releasing the T-strand. Its function is as follows. TraI has also been identified as DNA helicase I. DNA. helicase I is a potent, highly processive DNA-dependent ATPase, able to unwind about 1.1 kb dsDNA per second in a 5' to 3' manner. The protein is Multifunctional conjugation protein TraI (traI) of Escherichia coli (strain K12).